A 114-amino-acid chain; its full sequence is Neurotrophic factor BDNF precursor form (114 aa).

3 disulfides stabilise this stretch: Cys14–Cys81, Cys59–Cys110, and Cys69–Cys112.

The protein belongs to the NGF-beta family.

The protein localises to the secreted. Its function is as follows. Promotes the survival of neuronal populations that are all located either in the central nervous system or directly connected to it. This Xenopus laevis (African clawed frog) protein is Neurotrophic factor BDNF precursor form (bdnf).